The primary structure comprises 92 residues: Ictacalcin (92 aa).

EF-hand domains are found at residues Ile-12–Asn-47 and Ser-49–Leu-84. Ca(2+) contacts are provided by Thr-27, Glu-32, Asp-62, Asn-64, Asp-66, and Glu-73.

Belongs to the S-100 family. Abundant in epithelial cells of olfactory rosette, barbel, skin and gill but not brain or muscle.

In terms of biological role, plays an important role in catfish calcium homeostasis. This Ictalurus punctatus (Channel catfish) protein is Ictacalcin.